The sequence spans 148 residues: 3-dehydroquinate dehydratase (148 aa).

The active-site Proton acceptor is the Y23. Residues N74, H80, and D87 each coordinate substrate. The Proton donor role is filled by H100. Substrate-binding positions include 101–102 (IS) and R111.

It belongs to the type-II 3-dehydroquinase family. Homododecamer.

It catalyses the reaction 3-dehydroquinate = 3-dehydroshikimate + H2O. The protein operates within metabolic intermediate biosynthesis; chorismate biosynthesis; chorismate from D-erythrose 4-phosphate and phosphoenolpyruvate: step 3/7. In terms of biological role, catalyzes a trans-dehydration via an enolate intermediate. The sequence is that of 3-dehydroquinate dehydratase from Thermoanaerobacter pseudethanolicus (strain ATCC 33223 / 39E) (Clostridium thermohydrosulfuricum).